The sequence spans 945 residues: LPS-assembly protein LptD (945 aa).

The N-terminal stretch at 1–33 (MALKSPAFRKKFPLLVTGSLLALQPLATSFVVA) is a signal peptide. A disordered region spans residues 56–98 (AQLPPRPVHDANSVSSSVATAADATGEEASGDKSKLVTEAKGR). Positions 65-79 (DANSVSSSVATAADA) are enriched in low complexity. A compositionally biased stretch (basic and acidic residues) spans 85–98 (SGDKSKLVTEAKGR).

The protein belongs to the LptD family. In terms of assembly, component of the lipopolysaccharide transport and assembly complex. Interacts with LptE and LptA.

Its subcellular location is the cell outer membrane. Functionally, together with LptE, is involved in the assembly of lipopolysaccharide (LPS) at the surface of the outer membrane. The chain is LPS-assembly protein LptD from Pseudomonas fluorescens (strain ATCC BAA-477 / NRRL B-23932 / Pf-5).